A 1034-amino-acid chain; its full sequence is MPRRKQQAPKRAAGYAQEEQLKEEEEIKEEEEEEDSGSVAQLQGGNDTGTDEELETGPEQKGCFSYQNSPGSHLSNQDAENESLLSDASDQVSDIKSVCGRDASDKKAHTHVRLPNEAHNCMDKMTAVYANILSDSYWSGLGLGFKLSNSERRNCDTRNGSNKSDFDWHQDALSKSLQQNLPSRSVSKPSLFSSVQLYRQSSKMCGTVFTGASRFRCRQCSAAYDTLVELTVHMNETGHYQDDNRKKDKLRPTSYSKPRKRAFQDMDKEDAQKVLKCMFCGDSFDSLQDLSVHMIKTKHYQKVPLKEPVPTISSKMVTPAKKRVFDVNRPCSPDSTTGSFADSFSSQKNANLQLSSNNRYGYQNGASYTWQFEACKSQILKCMECGSSHDTLQQLTTHMMVTGHFLKVTSSASKKGKQLVLDPLAVEKMQSLSEAPNSDSLAPKPSSNSASDCTASTTELKKESKKERPEETSKDEKVVKSEDYEDPLQKPLDPTIKYQYLREEDLEDGSKGGGDILKSLENTVTTAINKAQNGAPSWSAYPSIHAAYQLSEGTKPPLPMGSQVLQIRPNLTNKLRPIAPKWKVMPLVSMPTHLAPYTQVKKESEDKDEAVKECGKESPHEEASSFSHSEGDSFRKSETPPEAKKTELGPLKEEEKLMKEGSEKEKPQPLEPTSALSNGCALANHAPALPCINPLSALQSVLNNHLGKATEPLRSPSCSSPSSSTISMFHKSNLNVMDKPVLSPASTRSASVSRRYLFENSDQPIDLTKSKSKKAESSQAQSCMSPPQKHALSDIADMVKVLPKATTPKPASSSRVPPMKLEMDVRRFEDVSSEVSTLHKRKGRQSNWNPQHLLILQAQFASSLFQTSEGKYLLSDLGPQERMQISKFTGLSMTTISHWLANVKYQLRKTGGTKFLKNMDKGHPIFYCSDCASQFRTPSTYISHLESHLGFQMKDMTRLSVDQQSKVEQEISRVSSAQRSPETIAAEEDTDSKFKCKLCCRTFVSKHAVKLHLSKTHSKSPEHHSQFVTDVDEE.

The segment at 1-90 is disordered; that stretch reads MPRRKQQAPK…NESLLSDASD (90 aa). A coiled-coil region spans residues 13–38; that stretch reads AGYAQEEQLKEEEEIKEEEEEEDSGS. Residues 21 to 36 show a composition bias toward acidic residues; sequence LKEEEEIKEEEEEEDS. Residues 65-90 are compositionally biased toward polar residues; the sequence is SYQNSPGSHLSNQDAENESLLSDASD. Residue Lys188 forms a Glycyl lysine isopeptide (Lys-Gly) (interchain with G-Cter in SUMO2) linkage. C2H2-type zinc fingers lie at residues 215–239 and 275–299; these read FRCRQCSAAYDTLVELTVHMNETGH and LKCMFCGDSFDSLQDLSVHMIKTKH. The segment at 239 to 265 is disordered; it reads HYQDDNRKKDKLRPTSYSKPRKRAFQD. Residues Lys306 and Lys315 each participate in a glycyl lysine isopeptide (Lys-Gly) (interchain with G-Cter in SUMO2) cross-link. The segment at 380–404 adopts a C2H2-type 3; atypical zinc-finger fold; it reads LKCMECGSSHDTLQQLTTHMMVTGH. A Glycyl lysine isopeptide (Lys-Gly) (interchain with G-Cter in SUMO2) cross-link involves residue Lys417. A compositionally biased stretch (polar residues) spans 432 to 455; it reads LSEAPNSDSLAPKPSSNSASDCTA. The interval 432 to 496 is disordered; it reads LSEAPNSDSL…PLQKPLDPTI (65 aa). Residues 459–482 show a composition bias toward basic and acidic residues; that stretch reads ELKKESKKERPEETSKDEKVVKSE. Residues Lys461, Lys480, Lys497, Lys601, and Lys652 each participate in a glycyl lysine isopeptide (Lys-Gly) (interchain with G-Cter in SUMO2) cross-link. Disordered stretches follow at residues 598–676 and 763–789; these read TQVK…TSAL and QPIDLTKSKSKKAESSQAQSCMSPPQK. A compositionally biased stretch (basic and acidic residues) spans 600–668; it reads VKKESEDKDE…KEGSEKEKPQ (69 aa). Residues Lys800 and Lys820 each participate in a glycyl lysine isopeptide (Lys-Gly) (interchain with G-Cter in SUMO2) cross-link. The homeobox; atypical DNA-binding region spans 841 to 911; the sequence is RKGRQSNWNP…NVKYQLRKTG (71 aa). The C2H2-type 4 zinc-finger motif lies at 926–948; sequence FYCSDCASQFRTPSTYISHLESH. Residue Lys966 forms a Glycyl lysine isopeptide (Lys-Gly) (interchain with G-Cter in SUMO2) linkage. Ser980 carries the post-translational modification Phosphoserine. The segment at 994–1017 adopts a C2H2-type 5 zinc-finger fold; that stretch reads FKCKLCCRTFVSKHAVKLHLSKTH. The tract at residues 1014 to 1034 is disordered; the sequence is SKTHSKSPEHHSQFVTDVDEE.

The protein belongs to the teashirt C2H2-type zinc-finger protein family. Interacts (via homeobox domain) with APBB1 (via PID domain 1). In terms of processing, sumoylated. In terms of tissue distribution, expressed in brain; strongly reduced in post-mortem elderly subjects with Alzheimer disease.

The protein resides in the nucleus. Probable transcriptional regulator involved in developmental processes. May act as a transcriptional repressor (Potential). In Homo sapiens (Human), this protein is Teashirt homolog 2 (TSHZ2).